The sequence spans 579 residues: Rho guanine nucleotide exchange factor 25 (579 aa).

Disordered stretches follow at residues 27-61 (AVPGQEGPQERDPLGPGSTKTESECTEEDQTGERE) and 172-194 (VKAQPAEEETLSQAPKNEEEQKK). One can recognise a DH domain in the interval 199–375 (RSMFVLSELV…CFVPKRCNDM (177 aa)). The tract at residues 317 to 338 (LGHRLQLSDLLIKPVQRIMKYQ) is important for binding to Rho GTPases. Residues 380 to 499 (RLRGFEGKLT…ESQTNSLGRS (120 aa)) enclose the PH domain. A sufficient to bind activated GNAQ region spans residues 472-498 (SQRDFLNALQSPIEYQRRESQTNSLGR). Disordered stretches follow at residues 487–516 (QRRESQTNSLGRSGGPGVGSPGRMAQVSMH) and 546–579 (LSETPLTPYDPPALPTVNSPPGQARLAKLDEDEL).

Interacts with activated GNAQ and GNA11. Interacts with RHOA, CDC42 and RAC1. Interacts (via the DH domain) with POPDC1 (via the C-terminus cytoplasmic tail).

The protein resides in the cytoplasm. It localises to the myofibril. Its subcellular location is the sarcomere. The protein localises to the cell membrane. Its function is as follows. May play a role in actin cytoskeleton reorganization in different tissues since its activation induces formation of actin stress fibers. It works as a guanine nucleotide exchange factor for Rho family of small GTPases. Links specifically G alpha q/11-coupled receptors to RHOA activation. May be an important regulator of processes involved in axon and dendrite formation. In neurons seems to be an exchange factor primarily for RAC1. Involved in skeletal myogenesis. This is Rho guanine nucleotide exchange factor 25 (Arhgef25) from Rattus norvegicus (Rat).